Consider the following 615-residue polypeptide: Sodium-dependent dopamine transporter (615 aa).

The disordered stretch occupies residues 1–39 (MQLVPTDDPDEKIGRTSNGMQNATLPIDGPVNTEPKDPA). The Cytoplasmic portion of the chain corresponds to 1–46 (MQLVPTDDPDEKIGRTSNGMQNATLPIDGPVNTEPKDPAREQWSGK). Positions 15–24 (RTSNGMQNAT) are enriched in polar residues. The chain crosses the membrane as a helical span at residues 47 to 72 (LDFLLSVVGFAVDLGNIWRFPYLCFK). Na(+) contacts are provided by G55, A57, V58, and N62. The Extracellular segment spans residues 73–76 (NGGG). Residues 77 to 100 (VFLIPYSIMVLLTGVPLFYMELCL) traverse the membrane as a helical segment. At 101 to 120 (GQYYRKGAITTWGRICPLFK) the chain is on the cytoplasmic side. The helical transmembrane segment at 121–151 (GIGYCVILTAFYVDFFYNVILAWGLHYLYTS) threads the bilayer. The Extracellular portion of the chain corresponds to 152–229 (FSFNLPWASC…IRSVTDLGNV (78 aa)). Cysteines 161 and 170 form a disulfide. N-linked (GlcNAc...) asparagine glycosylation is found at N162 and N187. Residues 230–250 (RWDIALSLFVVYLICYFSMWK) form a helical membrane-spanning segment. Over 251-253 (GIH) the chain is Cytoplasmic. Residues 254 to 278 (TSGKVVWFTALFPYVVLGILFIRGV) form a helical membrane-spanning segment. The Extracellular portion of the chain corresponds to 279-302 (TLPGWQNGIEYYLRPNFEMLKRPS). A helical transmembrane segment spans residues 303–328 (VWQDAATQVFFSLGPGFGVLMAYSSY). S314 contacts Na(+). The Cytoplasmic portion of the chain corresponds to 329-334 (NDFHNN). A helical transmembrane segment spans residues 335 to 358 (VYVDALFTSFINCATSFLSGFVIF). A Na(+)-binding site is contributed by N346. Topologically, residues 359-398 (SVLGYMSCKSGKPIEAVAQEGPGLVFVVYPEALSTMPYAP) are extracellular. The chain crosses the membrane as a helical span at residues 399 to 424 (FWSVLFFLMLMTLGLDSSFGGSEAII). Positions 411, 414, and 415 each coordinate Na(+). The Cytoplasmic portion of the chain corresponds to 425–439 (TGLSDEFPILKKNRE). Residues 440–460 (VFVGCLFAFYMVIGIAMCTEG) traverse the membrane as a helical segment. Position 461 (G461) is a topological domain, extracellular. Residues 462 to 488 (ILIMEWLIIYGTTWGLLIAVFCEAMVI) traverse the membrane as a helical segment. Residues 489–518 (AYIYGLRQFVHDVKEMMGFRPGNYWKFCWS) are Cytoplasmic-facing. A helical membrane pass occupies residues 519 to 541 (CAAPFILLSMITSNFINYQALTY). Topologically, residues 542-544 (QDY) are extracellular. A helical transmembrane segment spans residues 545-565 (TYPTAANVIGIIFALSGASFI). At 566-615 (PLVGIYKFVNARGNTISEKWQRVTMPYRKRPNQTEYIPIPTTQPHSDIML) the chain is on the cytoplasmic side.

This sequence belongs to the sodium:neurotransmitter symporter (SNF) (TC 2.A.22) family.

Its subcellular location is the cell membrane. Its function is as follows. Dopamine transporter. Terminates the action of dopamine by its high affinity sodium-dependent reuptake into presynaptic terminals. Plays a role in the learned avoidance behavior of animals exposed to food that induces mitochondrial stress. The chain is Sodium-dependent dopamine transporter from Caenorhabditis elegans.